A 156-amino-acid chain; its full sequence is ATP synthase subunit b (156 aa).

A helical transmembrane segment spans residues 7–29; the sequence is LIGQLIAFALFTWFCVKFVWPPI.

The protein belongs to the ATPase B chain family. As to quaternary structure, F-type ATPases have 2 components, F(1) - the catalytic core - and F(0) - the membrane proton channel. F(1) has five subunits: alpha(3), beta(3), gamma(1), delta(1), epsilon(1). F(0) has three main subunits: a(1), b(2) and c(10-14). The alpha and beta chains form an alternating ring which encloses part of the gamma chain. F(1) is attached to F(0) by a central stalk formed by the gamma and epsilon chains, while a peripheral stalk is formed by the delta and b chains.

The protein resides in the cell inner membrane. Functionally, f(1)F(0) ATP synthase produces ATP from ADP in the presence of a proton or sodium gradient. F-type ATPases consist of two structural domains, F(1) containing the extramembraneous catalytic core and F(0) containing the membrane proton channel, linked together by a central stalk and a peripheral stalk. During catalysis, ATP synthesis in the catalytic domain of F(1) is coupled via a rotary mechanism of the central stalk subunits to proton translocation. In terms of biological role, component of the F(0) channel, it forms part of the peripheral stalk, linking F(1) to F(0). The polypeptide is ATP synthase subunit b (Actinobacillus succinogenes (strain ATCC 55618 / DSM 22257 / CCUG 43843 / 130Z)).